Here is an 885-residue protein sequence, read N- to C-terminus: Rho GTPase-activating protein gacFF (885 aa).

Residues 168-182 are compositionally biased toward low complexity; that stretch reads TTTNNSNNSNSNNNN. The segment at 168–187 is disordered; the sequence is TTTNNSNNSNSNNNNKQYNS. Residues 222–249 adopt a coiled-coil conformation; it reads LINKIQNDSEQLKLVLSQVEQQIEFLKS. Residues 348–394 enclose the F-box domain; sequence SDIFSLLPTHLTLYVFSYLEPKELLILAQVSSQWQKLAGDNLLWVRF. In terms of domain architecture, PH spans 464–571; sequence SSSKEGWLYK…WMILLNSIIK (108 aa). 2 stretches are compositionally biased toward low complexity: residues 594 to 622 and 629 to 648; these read NNVYINNNNNNNNNNNNNNNNNNNNNNNN and LPPLLSKSPSFSNALTSSTG. Residues 594–680 are disordered; sequence NNVYINNNNN…GGGSGGNNNF (87 aa). The 185-residue stretch at 701–885 folds into the Rho-GAP domain; the sequence is VALSKILENQ…KYYDEIFIKK (185 aa).

The protein resides in the cytoplasm. Its function is as follows. Rho GTPase-activating protein involved in the signal transduction pathway. This is Rho GTPase-activating protein gacFF (gacFF) from Dictyostelium discoideum (Social amoeba).